The sequence spans 415 residues: Serine hydroxymethyltransferase (415 aa).

(6S)-5,6,7,8-tetrahydrofolate is bound by residues Leu-121 and 125–127 (GHL). Position 229 is an N6-(pyridoxal phosphate)lysine (Lys-229). 352 to 354 (SPF) contacts (6S)-5,6,7,8-tetrahydrofolate.

The protein belongs to the SHMT family. Homodimer. The cofactor is pyridoxal 5'-phosphate.

The protein localises to the cytoplasm. The enzyme catalyses (6R)-5,10-methylene-5,6,7,8-tetrahydrofolate + glycine + H2O = (6S)-5,6,7,8-tetrahydrofolate + L-serine. It functions in the pathway one-carbon metabolism; tetrahydrofolate interconversion. The protein operates within amino-acid biosynthesis; glycine biosynthesis; glycine from L-serine: step 1/1. Functionally, catalyzes the reversible interconversion of serine and glycine with tetrahydrofolate (THF) serving as the one-carbon carrier. This reaction serves as the major source of one-carbon groups required for the biosynthesis of purines, thymidylate, methionine, and other important biomolecules. Also exhibits THF-independent aldolase activity toward beta-hydroxyamino acids, producing glycine and aldehydes, via a retro-aldol mechanism. This chain is Serine hydroxymethyltransferase, found in Methylobacillus flagellatus (strain ATCC 51484 / DSM 6875 / VKM B-1610 / KT).